We begin with the raw amino-acid sequence, 141 residues long: Large ribosomal subunit protein uL11 (141 aa).

It belongs to the universal ribosomal protein uL11 family. In terms of assembly, part of the ribosomal stalk of the 50S ribosomal subunit. Interacts with L10 and the large rRNA to form the base of the stalk. L10 forms an elongated spine to which L12 dimers bind in a sequential fashion forming a multimeric L10(L12)X complex. In terms of processing, one or more lysine residues are methylated.

Forms part of the ribosomal stalk which helps the ribosome interact with GTP-bound translation factors. The chain is Large ribosomal subunit protein uL11 from Phytoplasma australiense.